The following is a 41-amino-acid chain: Large ribosomal subunit protein bL36 (41 aa).

The protein belongs to the bacterial ribosomal protein bL36 family.

This is Large ribosomal subunit protein bL36 from Paracoccus denitrificans (strain Pd 1222).